We begin with the raw amino-acid sequence, 324 residues long: Proto-oncogene Mas (324 aa).

Over methionine 1–histidine 35 the chain is Extracellular. N-linked (GlcNAc...) asparagine glycans are attached at residues asparagine 5, asparagine 16, and asparagine 21. A helical membrane pass occupies residues tryptophan 36–methionine 60. Residues arginine 61–proline 64 are Cytoplasmic-facing. Residues phenylalanine 65–leucine 86 form a helical membrane-spanning segment. Residues serine 87–threonine 103 lie on the Extracellular side of the membrane. The helical transmembrane segment at isoleucine 104–valine 127 threads the bilayer. Over glutamate 128–serine 148 the chain is Cytoplasmic. A helical membrane pass occupies residues alanine 149–isoleucine 171. Topologically, residues aspartate 172–arginine 184 are extracellular. The chain crosses the membrane as a helical span at residues alanine 185 to serine 205. Residues serine 206–serine 223 are Cytoplasmic-facing. Residues lysine 224–arginine 244 form a helical membrane-spanning segment. At valine 245 to asparagine 262 the chain is on the extracellular side. Residues isoleucine 263–glycine 283 form a helical membrane-spanning segment. Residues serine 284–valine 324 lie on the Cytoplasmic side of the membrane.

The protein belongs to the G-protein coupled receptor 1 family. Interacts with AGTR1. Interacts with FLNA (via filamin repeat 21); increases PKA-mediated phosphorylation of FLNA.

The protein resides in the cell membrane. Acts specifically as a functional antagonist of AGTR1 (angiotensin-2 type 1 receptor), although it up-regulates AGTR1 receptor levels. Positive regulation of AGTR1 levels occurs through activation of the G-proteins GNA11 and GNAQ, and stimulation of the protein kinase C signaling cascade. The antagonist effect on AGTR1 function is probably due to AGTR1 being physically altered by MAS1. Receptor for angiotensin 1-7. This Mus musculus (Mouse) protein is Proto-oncogene Mas (Mas1).